The chain runs to 383 residues: S-adenosylmethionine synthase (383 aa).

Residue His-15 participates in ATP binding. Mg(2+) is bound at residue Asp-17. Residue Glu-43 coordinates K(+). L-methionine contacts are provided by Glu-56 and Gln-99. The tract at residues 99–109 is flexible loop; sequence QSPDINQGVDR. ATP is bound by residues 164–166, 230–231, Asp-239, 245–246, Ala-262, and Lys-266; these read DAK, RF, and RK. Asp-239 contacts L-methionine. Residue Lys-270 coordinates L-methionine.

It belongs to the AdoMet synthase family. Homotetramer; dimer of dimers. Mg(2+) serves as cofactor. Requires K(+) as cofactor.

Its subcellular location is the cytoplasm. The enzyme catalyses L-methionine + ATP + H2O = S-adenosyl-L-methionine + phosphate + diphosphate. The protein operates within amino-acid biosynthesis; S-adenosyl-L-methionine biosynthesis; S-adenosyl-L-methionine from L-methionine: step 1/1. Functionally, catalyzes the formation of S-adenosylmethionine (AdoMet) from methionine and ATP. The overall synthetic reaction is composed of two sequential steps, AdoMet formation and the subsequent tripolyphosphate hydrolysis which occurs prior to release of AdoMet from the enzyme. This Shewanella amazonensis (strain ATCC BAA-1098 / SB2B) protein is S-adenosylmethionine synthase.